The following is a 118-amino-acid chain: NADH-quinone oxidoreductase subunit A (118 aa).

3 consecutive transmembrane segments (helical) span residues Ile8–Phe28, Ala64–Phe84, and Val87–Leu107.

The protein belongs to the complex I subunit 3 family. As to quaternary structure, NDH-1 is composed of 14 different subunits. Subunits NuoA, H, J, K, L, M, N constitute the membrane sector of the complex.

It is found in the cell membrane. It carries out the reaction a quinone + NADH + 5 H(+)(in) = a quinol + NAD(+) + 4 H(+)(out). NDH-1 shuttles electrons from NADH, via FMN and iron-sulfur (Fe-S) centers, to quinones in the respiratory chain. The immediate electron acceptor for the enzyme in this species is believed to be ubiquinone. Couples the redox reaction to proton translocation (for every two electrons transferred, four hydrogen ions are translocated across the cytoplasmic membrane), and thus conserves the redox energy in a proton gradient. The chain is NADH-quinone oxidoreductase subunit A from Chloroflexus aurantiacus (strain ATCC 29366 / DSM 635 / J-10-fl).